We begin with the raw amino-acid sequence, 144 residues long: UPF0547 protein C16orf87 homolog (144 aa).

The segment at 33 to 112 (HAKQSQRLPP…EEKEKQEKEV (80 aa)) is disordered. The segment covering 35–45 (KQSQRLPPTSE) has biased composition (polar residues). Over residues 50–62 (PKRRRTERIKRER) the composition is skewed to basic residues. Basic and acidic residues-rich tracts occupy residues 63–74 (IHTAVNRDLENR) and 99–112 (KKHE…EKEV). Positions 94-122 (KTATTKKHEEEKEKQEKEVDMYANLSDEK) form a coiled coil.

This sequence belongs to the UPF0547 family.

This Xenopus laevis (African clawed frog) protein is UPF0547 protein C16orf87 homolog.